The primary structure comprises 460 residues: GTPase Der (460 aa).

EngA-type G domains follow at residues Lys-2–Ile-164 and Ile-199–Thr-370. GTP contacts are provided by residues Gly-8–Ser-15, Asp-55–Leu-59, Asn-116–Asp-119, Gly-205–Ser-212, Asp-252–Ile-256, and Asn-316–Asp-319. In terms of domain architecture, KH-like spans Gln-371–Gly-454.

It belongs to the TRAFAC class TrmE-Era-EngA-EngB-Septin-like GTPase superfamily. EngA (Der) GTPase family. As to quaternary structure, associates with the 50S ribosomal subunit.

In terms of biological role, GTPase that plays an essential role in the late steps of ribosome biogenesis. The chain is GTPase Der from Campylobacter hominis (strain ATCC BAA-381 / DSM 21671 / CCUG 45161 / LMG 19568 / NCTC 13146 / CH001A).